A 359-amino-acid polypeptide reads, in one-letter code: Serpentine receptor class epsilon-33 (359 aa).

Transmembrane regions (helical) follow at residues 29–49, 65–85, 134–156, 168–188, 194–214, 255–275, and 285–305; these read VIIS…VNVS, ILAL…FITI, YMYS…SVLI, PAIL…GLLF, LSAH…YVFV, LVFA…ALHY, and LIEN…MLSI.

The protein belongs to the nematode receptor-like protein sre family.

The protein resides in the membrane. The sequence is that of Serpentine receptor class epsilon-33 (sre-33) from Caenorhabditis elegans.